The sequence spans 524 residues: Serine/threonine-protein kinase PAK 2 (524 aa).

The interval 1–81 (MSDNGELEDK…PEISPPSDFE (81 aa)) is disordered. Position 2 is an N-acetylserine (Ser2). 5 positions are modified to phosphoserine: Ser2, Ser20, Ser55, Ser58, and Ser59. The residue at position 60 (Thr60) is a Phosphothreonine. An N6-acetyllysine modification is found at Lys62. Phosphoserine is present on Ser64. The segment covering 67–81 (KEKERPEISPPSDFE) has biased composition (basic and acidic residues). Residues 69-112 (KERPEISPPSDFEHTIHVGFDAVTGEFTGMPEQWARLLQTSNIT) are GTPase-binding. An autoregulatory region region spans residues 69–137 (KERPEISPPS…KFYDSNTVKQ (69 aa)). The CRIB domain maps to 74-87 (ISPPSDFEHTIHVG). Residues 88–248 (FDAVTGEFTG…IVSIGDPKKK (161 aa)) form a linker region. Residue Lys128 is modified to N6-acetyllysine. Position 134 is a phosphothreonine (Thr134). The residue at position 139 (Tyr139) is a Phosphotyrosine. Position 141 is a phosphoserine (Ser141). The segment at 142 to 190 (FTPPEKDGFPSGTPALNTKGSETSAVVTEEDDDDEDAAPPVIAPRPDHT) is disordered. The residue at position 143 (Thr143) is a Phosphothreonine. Residue Ser152 is modified to Phosphoserine. Residues Thr154, Thr159, and Thr169 each carry the phosphothreonine modification. Over residues 155 to 167 (PALNTKGSETSAV) the composition is skewed to polar residues. Positions 169 to 178 (TEEDDDDEDA) are enriched in acidic residues. Position 197 is a phosphoserine (Ser197). A disordered region spans residues 204 to 228 (APVGDSNVDSGAKSSDKQKKKAKMT). The short motif at 245-251 (PKKKYTR) is the Nuclear localization signal element. In terms of domain architecture, Protein kinase spans 249-500 (YTRYEKIGQG…AKELLQHPFL (252 aa)). ATP contacts are provided by residues 255–263 (IGQGASGTV) and Lys278. The active-site Proton acceptor is Asp368. A Phosphothreonine; by autocatalysis modification is found at Thr402.

It belongs to the protein kinase superfamily. STE Ser/Thr protein kinase family. STE20 subfamily. Interacts tightly with GTP-bound but not GDP-bound CDC42/p21 and RAC1. Interacts with SH3MD4. Interacts with SCRIB. Interacts with ARHGEF7 and GIT1. PAK-2p34 interacts with ARHGAP10. Interacts with RAC1. Full-length PAK2 is autophosphorylated when activated by CDC42/p21. Following cleavage, both peptides, PAK-2p27 and PAK-2p34, become highly autophosphorylated. Autophosphorylation of PAK-2p27 can occur in the absence of any effectors and is dependent on phosphorylation of Thr-402, because PAK-2p27 is acting as an exogenous substrate. Post-translationally, during apoptosis proteolytically cleaved by caspase-3 or caspase-3-like proteases to yield active PAK-2p34. In terms of processing, ubiquitinated, leading to its proteasomal degradation.

It is found in the cytoplasm. The protein resides in the nucleus. Its subcellular location is the perinuclear region. It localises to the membrane. The catalysed reaction is L-seryl-[protein] + ATP = O-phospho-L-seryl-[protein] + ADP + H(+). It catalyses the reaction L-threonyl-[protein] + ATP = O-phospho-L-threonyl-[protein] + ADP + H(+). With respect to regulation, activated by binding small G proteins. Binding of GTP-bound CDC42 or RAC1 to the autoregulatory region releases monomers from the autoinhibited dimer, enables phosphorylation of Thr-402 and allows the kinase domain to adopt an active structure. Following caspase cleavage, autophosphorylated PAK-2p34 is constitutively active. Serine/threonine protein kinase that plays a role in a variety of different signaling pathways including cytoskeleton regulation, cell motility, cell cycle progression, apoptosis or proliferation. Acts as a downstream effector of the small GTPases CDC42 and RAC1. Activation by the binding of active CDC42 and RAC1 results in a conformational change and a subsequent autophosphorylation on several serine and/or threonine residues. Full-length PAK2 stimulates cell survival and cell growth. Phosphorylates MAPK4 and MAPK6 and activates the downstream target MAPKAPK5, a regulator of F-actin polymerization and cell migration. Phosphorylates JUN and plays an important role in EGF-induced cell proliferation. Phosphorylates many other substrates including histone H4 to promote assembly of H3.3 and H4 into nucleosomes, BAD, ribosomal protein S6, or MBP. Phosphorylates CASP7, thereby preventing its activity. Additionally, associates with ARHGEF7 and GIT1 to perform kinase-independent functions such as spindle orientation control during mitosis. On the other hand, apoptotic stimuli such as DNA damage lead to caspase-mediated cleavage of PAK2, generating PAK-2p34, an active p34 fragment that translocates to the nucleus and promotes cellular apoptosis involving the JNK signaling pathway. Caspase-activated PAK2 phosphorylates MKNK1 and reduces cellular translation. This Rattus norvegicus (Rat) protein is Serine/threonine-protein kinase PAK 2 (Pak2).